The sequence spans 316 residues: Bifunctional peptidase and (3S)-lysyl hydroxylase JMJD7 (316 aa).

A JmjC domain is found at 128 to 307; it reads VQKQCSNLPS…LKYSYFQLLD (180 aa). The Fe cation site is built by His178, Asp180, and His277.

Homodimer; disulfide-linked. Interacts with DRG1 and DRG2. Fe(2+) is required as a cofactor.

It localises to the nucleus. The protein resides in the cytoplasm. It catalyses the reaction L-lysyl-[protein] + 2-oxoglutarate + O2 = (3S)-3-hydroxy-L-lysyl-[protein] + succinate + CO2. Bifunctional enzyme that acts both as an endopeptidase and 2-oxoglutarate-dependent monooxygenase. Endopeptidase that cleaves histones N-terminal tails at the carboxyl side of methylated arginine or lysine residues, to generate 'tailless nucleosomes', which may trigger transcription elongation. Preferentially recognizes and cleaves monomethylated and dimethylated arginine residues of histones H2, H3 and H4. After initial cleavage, continues to digest histones tails via its aminopeptidase activity. Additionally, may play a role in protein biosynthesis by modifying the translation machinery. Acts as a Fe(2+) and 2-oxoglutarate-dependent monooxygenase, catalyzing (S)-stereospecific hydroxylation at C-3 of 'Lys-22' of DRG1 and 'Lys-21' of DRG2 translation factors (TRAFAC), promoting their interaction with ribonucleic acids (RNA). This is Bifunctional peptidase and (3S)-lysyl hydroxylase JMJD7 from Homo sapiens (Human).